The following is a 762-amino-acid chain: MSSPAVARASPGGNREASGGPRSRNGPWEVGGGGERLERAGAESGRWELLLRRGELLALGGHLKGALEAFAAALRRGAPARPERLGSLVDCLVFSYRLRHGLRWSAAPAAGAAGLLSCLSCRGFLSEPVTVPCGHSYCRRCLRRELRARCRLCRDRLPPAAAASEGTPRPPPLAAAIADFRTSVVLNHLAEKWFPGQRERARAAGRLGELLHEGRYREALAAACDALRAEPSDLTLKIYRAESYAGLQEFKAALEDLNAVLFQLPNWPEVYFRKGKVLQDAGFLGDALQLFLQCLALDEDFAPAKLQVEKILCDLLSPENVREGLKESSWSSLPCIKSKPLGFPSVMEQPHSPAELGLKQPEERVEDAPEPVKGSLSRAQSAQAISAAAVPAREDGLKRVCSEPLLSAQGKGVLLKRKLSLLEQDVLINEDGRSKLKKQSESPSEDCMFSIAYGDIPEELIDVSDFECSLCMRLFFEPVTTPCGHSFCKNCLERCLDHAPYCPLCKESLKEYLADRRYCVTQLLEELIVKYLPDELSERKKIYDEETAELSHLTKNVPIFVCTMAYPTVPCPLHVFEPRYRLMIRRSIQTGTKQFGMCVSDTQNSFADYGCMLQIRNVHFLPDGRSVVDTVGGKRFRVLKRGMKDGYCTADIEYLEDVKIENGDEIRSLRELHDSVYSQACSWFQNLRDRFRSQILQHFGSMPEREENLQATPNGPAWCWWLLAVLPVDPRYQLSVLSMKSLEERLTKIQHILTYFSRDQSK.

Residues 1–35 are disordered; the sequence is MSSPAVARASPGGNREASGGPRSRNGPWEVGGGGE. The stretch at 47–80 is one TPR 1 repeat; that stretch reads WELLLRRGELLALGGHLKGALEAFAAALRRGAPA. The RING-type 1 zinc finger occupies 118–154; it reads CLSCRGFLSEPVTVPCGHSYCRRCLRRELRARCRLCR. 3 TPR repeats span residues 201 to 233, 235 to 267, and 268 to 301; these read ARAA…EPSD, TLKI…LPNW, and PEVY…DEDF. The residue at position 420 (Ser-420) is a Phosphoserine. The segment at 468-506 adopts an RING-type 2 zinc-finger fold; sequence CSLCMRLFFEPVTTPCGHSFCKNCLERCLDHAPYCPLCK. One can recognise a Lon N-terminal domain in the interval 547 to 757; the sequence is TAELSHLTKN…KIQHILTYFS (211 aa).

The polypeptide is LON peptidase N-terminal domain and RING finger protein 1 (Lonrf1) (Mus musculus (Mouse)).